Here is a 461-residue protein sequence, read N- to C-terminus: Lysosomal proton-coupled steroid conjugate and bile acid symporter SLC46A3 (461 aa).

An N-terminal signal peptide occupies residues 1–25; it reads MKIPFVEPVICLSVFAVTLNSPLTT. Topologically, residues 26–70 are extracellular; that stretch reads QYVYRRIWEETGNYSIALESNTSECAKNKSSPIFAFQEEVQKKVS. N-linked (GlcNAc...) asparagine glycosylation is found at N38, N46, and N53. The helical transmembrane segment at 71-91 threads the bilayer; the sequence is LFNLEMDISGLIPGLVSTFVF. Residues 92 to 101 are Cytoplasmic-facing; it reads LSHSDHGGRK. A helical transmembrane segment spans residues 102–124; the sequence is FPLILSSVGALANSAWLCLLSYF. The Extracellular segment spans residues 125 to 133; the sequence is ALPIQLLIA. Residues 134-156 form a helical membrane-spanning segment; the sequence is STFIGALFGNYTTFLGASFAYIV. Topologically, residues 157-170 are cytoplasmic; sequence DQCKEKKQRTIRIA. A helical transmembrane segment spans residues 171-191; that stretch reads IIDFLFGVVSGLTGLSSGYFI. Over 192 to 195 the chain is Extracellular; that stretch reads RGLG. The chain crosses the membrane as a helical span at residues 196-216; it reads FVWSFLIVTVALFVNLIYILL. At 217–261 the chain is on the cytoplasmic side; it reads FLEDSMKESSSQNISVSWTETFKNLFHRTYMLFKNASGEQQSLCC. A helical transmembrane segment spans residues 262 to 282; it reads LLLFTMITYFFVTIGVSPIFV. The Extracellular segment spans residues 283–294; that stretch reads LYELDSPLCWDE. A helical membrane pass occupies residues 295–315; sequence VLIGYGSALGSVTFFSSFLGI. The Cytoplasmic segment spans residues 316–324; sequence WLFSYCMED. Residues 325–345 traverse the membrane as a helical segment; the sequence is IHMAFIGTFTTMVGMAMTAFA. The Extracellular portion of the chain corresponds to 346 to 347; sequence RT. Residues 348 to 368 traverse the membrane as a helical segment; sequence TLMMFLVRLPFLFTVMPLSVL. Residues 369–382 are Cytoplasmic-facing; that stretch reads RSMISKVVHSTEQG. Residues 383-403 traverse the membrane as a helical segment; that stretch reads TMFACLAFLETLGGITAVSTF. At 404-415 the chain is on the extracellular side; the sequence is NGIYSATVAWCK. Residues 416-436 traverse the membrane as a helical segment; the sequence is GFVFLLSAVLLLIPAISLCVI. Residues 437–461 lie on the Cytoplasmic side of the membrane; that stretch reads KYVSRNTGSYVLLIQEESSEDTSDR. The Tyrosine-based lysosomal-sorting motif motif lies at 446-449; the sequence is YVLL.

This sequence belongs to the major facilitator superfamily. SLC46A family.

It localises to the lysosome membrane. It carries out the reaction estrone 3-sulfate(out) + n H(+)(out) = estrone 3-sulfate(in) + n H(+)(in). It catalyses the reaction 25-hydroxyvitamin D3 sulfate(out) + n H(+)(out) = 25-hydroxyvitamin D3 sulfate(in) + n H(+)(in). The catalysed reaction is cholate(out) + n H(+)(out) = cholate(in) + n H(+)(in). The enzyme catalyses glycocholate(out) + n H(+)(out) = glycocholate(in) + n H(+)(in). It carries out the reaction taurocholate(out) + n H(+)(out) = taurocholate(in) + n H(+)(in). It catalyses the reaction dehydroepiandrosterone 3-sulfate(out) + n H(+)(out) = dehydroepiandrosterone 3-sulfate(in) + n H(+)(in). The catalysed reaction is N-acetyl-D-muramoyl-L-alanyl-D-isoglutamine(out) + n H(+)(out) = N-acetyl-D-muramoyl-L-alanyl-D-isoglutamine(in) + n H(+)(in). The enzyme catalyses 2',3'-cGAMP(out) + n H(+)(out) = 2',3'-cGAMP(in) + n H(+)(in). Lysosomal proton-coupled steroid conjugate and bile acid transporter. Preferentially recognizes lipophilic steroid conjugates or bile acis as endogenous substrates and seems to mediate escape from lysosomes to the cytoplasm. Modulates hepatic cytosolic copper homeostasis, maybe acting as a lysosomal copper transporter and sequestering copper ions in the lysosome. Delivers pathogen-associated molecular patterns to cytosolic pattern recognition receptors as part of the innate immune response to microbes. Selectively transports bacterial muramyl dipeptide (MDP) into the cytosol for recognition by NOD2, triggering inflammatory responses. Likely acts as a redundant importer of cyclic GMP-AMP dinucleotides (cGAMPs) in monocyte and macrophage cell lineages. The transport mechanism, its electrogenicity and stoichiometry remain to be elucidated. The protein is Lysosomal proton-coupled steroid conjugate and bile acid symporter SLC46A3 (SLC46A3) of Bos taurus (Bovine).